The following is a 166-amino-acid chain: Ubiquitin-fold modifier-conjugating enzyme 1 (166 aa).

Cysteine 116 acts as the Glycyl thioester intermediate in catalysis.

This sequence belongs to the ubiquitin-conjugating enzyme family. UFC1 subfamily.

Functionally, E2-like enzyme which forms an intermediate with UFM1 via a thioester linkage. This is Ubiquitin-fold modifier-conjugating enzyme 1 from Monosiga brevicollis (Choanoflagellate).